A 757-amino-acid polypeptide reads, in one-letter code: Mitofusin-2 (757 aa).

The Cytoplasmic segment spans residues 1–604 (MSLLFSRCNS…TQEELMVSMV (604 aa)). The tract at residues 30 to 94 (KHFVTAKKKI…VRGISEVLAR (65 aa)) is part of a helix bundle domain, formed by helices from N-terminal and C-terminal regions. The Dynamin-type G domain maps to 93 to 342 (ARRHMKVAFF…VRMFEFQNFE (250 aa)). The G1 motif stretch occupies residues 103–110 (GRTSNGKS). 106–111 (SNGKST) provides a ligand contact to GTP. T111 carries the post-translational modification Phosphothreonine; by PINK1. Positions 129–130 (TT) are G2 motif. The interval 199 to 202 (DSPG) is G3 motif. Residue 258–261 (NRWD) coordinates GTP. The tract at residues 258–261 (NRWD) is G4 motif. Residue E288 is a region of interest, G5 motif. 2 residues coordinate GTP: S305 and K307. Residues 359–385 (EQHTVRAKQIAEAVRLIMDSLHIAAQE) form a part of a helix bundle domain, formed by helices from N-terminal and C-terminal regions region. Residues 406 to 435 (KQLELLAQDYKLRIKQMTEEVERQVSTAMA) adopt a coiled-coil conformation. S442 is subject to Phosphoserine; by PINK1. The helical transmembrane segment at 605–625 (TGLASLTSRTSMGILVVGGVV) threads the bilayer. A topological domain (mitochondrial intermembrane) is located at residue W626. The chain crosses the membrane as a helical span at residues 627-647 (KAVGWRLIALSFGLYGLLYVY). The Cytoplasmic segment spans residues 648–757 (ERLTWTTRAK…FIHQYLQPSR (110 aa)). Residues 696–738 (FAHLCQQVDITRDNLEQEIAAMNKKVEALDSLQSKAKLLRNKA) are a coiled coil. The segment at 722–753 (EALDSLQSKAKLLRNKAGWLDSELNMFIHQYL) is part of a helix bundle domain, formed by helices from N-terminal and C-terminal regions.

It belongs to the TRAFAC class dynamin-like GTPase superfamily. Dynamin/Fzo/YdjA family. Mitofusin subfamily. As to quaternary structure, forms homomultimers and heteromultimers with MFN1. Oligomerization is essential for mitochondrion fusion. Interacts with VAT1. Interacts with STOML2; may form heterooligomers. Interacts (phosphorylated) with PRKN. Interacts with EIF2AK3. Interacts with THG1L; THG1L probably functions as a guanyl-nucleotide exchange factor/GEF, activating MFN2. Phosphorylated by PINK1. In terms of processing, ubiquitinated by non-degradative ubiquitin by PRKN, promoting mitochondrial fusion; deubiquitination by USP30 inhibits mitochondrial fusion. Ubiquitinated by HUWE1 when dietary stearate (C18:0) levels are low; ubiquitination inhibits mitochondrial fusion. Ubiquitous. In brain, it is more expressed than MFN1, while it is expressed at a weaker level than MFN1 in heart and testis. Expressed at high level in elongating spermatids of seminiferous tubules. Expression is markedly down-regulated in highly proliferative vascular smooth muscle cells (VSMCs) from the genetic hypertensive animal model SHR, as well as in balloon-injured Wistar Kyoto arteries.

The protein resides in the mitochondrion outer membrane. The enzyme catalyses GTP + H2O = GDP + phosphate + H(+). In terms of biological role, mitochondrial outer membrane GTPase that mediates mitochondrial clustering and fusion. Mitochondria are highly dynamic organelles, and their morphology is determined by the equilibrium between mitochondrial fusion and fission events. Overexpression induces the formation of mitochondrial networks. Membrane clustering requires GTPase activity and may involve a major rearrangement of the coiled coil domains. Plays a central role in mitochondrial metabolism and may be associated with obesity and/or apoptosis processes. Plays an important role in the regulation of vascular smooth muscle cell proliferation. Involved in the clearance of damaged mitochondria via selective autophagy (mitophagy). Is required for PRKN recruitment to dysfunctional mitochondria. Involved in the control of unfolded protein response (UPR) upon ER stress including activation of apoptosis and autophagy during ER stress. Acts as an upstream regulator of EIF2AK3 and suppresses EIF2AK3 activation under basal conditions. The sequence is that of Mitofusin-2 (Mfn2) from Rattus norvegicus (Rat).